The primary structure comprises 445 residues: Xylose isomerase (445 aa).

Active-site residues include His107 and Asp110. The Mg(2+) site is built by Glu238, Glu274, His277, Asp302, Asp313, Asp315, and Asp345.

Belongs to the xylose isomerase family. In terms of assembly, homotetramer. It depends on Mg(2+) as a cofactor.

The protein resides in the cytoplasm. The catalysed reaction is alpha-D-xylose = alpha-D-xylulofuranose. This Bacillus cereus (strain ATCC 10987 / NRS 248) protein is Xylose isomerase.